The following is a 393-amino-acid chain: Phosphoglycerate kinase (393 aa).

Substrate contacts are provided by residues 21–23 (DLN), R36, 59–62 (HLGR), R114, and R147. Residues K198, E314, and 340-343 (GGDT) contribute to the ATP site.

It belongs to the phosphoglycerate kinase family. In terms of assembly, monomer.

The protein localises to the cytoplasm. It carries out the reaction (2R)-3-phosphoglycerate + ATP = (2R)-3-phospho-glyceroyl phosphate + ADP. It functions in the pathway carbohydrate degradation; glycolysis; pyruvate from D-glyceraldehyde 3-phosphate: step 2/5. The chain is Phosphoglycerate kinase from Buchnera aphidicola subsp. Baizongia pistaciae (strain Bp).